An 830-amino-acid chain; its full sequence is Penicillin-binding protein 1A (830 aa).

The segment covering 1-17 has biased composition (basic residues); that stretch reads MTERKREHKDRKQKKNS. Residues 1-20 are disordered; it reads MTERKREHKDRKQKKNSPKN. The Cytoplasmic segment spans residues 1–30; that stretch reads MTERKREHKDRKQKKNSPKNQSKVTKFLKW. Residues 31–51 form a helical; Signal-anchor for type II membrane protein membrane-spanning segment; the sequence is FFIGILLLGITAVTVVGIYVL. The Extracellular segment spans residues 52–830; that stretch reads SIIRSSPELD…QNGQNNNITQ (779 aa). The tract at residues 72-244 is transglycosylase; sequence SILYDDQGNF…PTSYDGLSEA (173 aa). The Proton donor; for transglycosylase activity role is filled by glutamate 111. The segment at 378-663 is transpeptidase; sequence ASATIIDYKT…TSPIFGKIMG (286 aa). Serine 417 (acyl-ester intermediate; for transpeptidase activity) is an active-site residue. The interval 731 to 830 is disordered; the sequence is APDTNDNNNS…QNGQNNNITQ (100 aa). The segment covering 735–746 has biased composition (low complexity); sequence NDNNNSGANEGN. Positions 747-758 are enriched in basic and acidic residues; that stretch reads KQQETKPEEVKP. Low complexity-rich tracts occupy residues 759-807 and 816-830; these read NENN…NTNN and GNNQNQNGQNNNITQ.

In the N-terminal section; belongs to the glycosyltransferase 51 family. This sequence in the C-terminal section; belongs to the transpeptidase family.

The protein resides in the cell membrane. The enzyme catalyses [GlcNAc-(1-&gt;4)-Mur2Ac(oyl-L-Ala-gamma-D-Glu-L-Lys-D-Ala-D-Ala)](n)-di-trans,octa-cis-undecaprenyl diphosphate + beta-D-GlcNAc-(1-&gt;4)-Mur2Ac(oyl-L-Ala-gamma-D-Glu-L-Lys-D-Ala-D-Ala)-di-trans,octa-cis-undecaprenyl diphosphate = [GlcNAc-(1-&gt;4)-Mur2Ac(oyl-L-Ala-gamma-D-Glu-L-Lys-D-Ala-D-Ala)](n+1)-di-trans,octa-cis-undecaprenyl diphosphate + di-trans,octa-cis-undecaprenyl diphosphate + H(+). It carries out the reaction Preferential cleavage: (Ac)2-L-Lys-D-Ala-|-D-Ala. Also transpeptidation of peptidyl-alanyl moieties that are N-acyl substituents of D-alanine.. Its pathway is cell wall biogenesis; peptidoglycan biosynthesis. Its function is as follows. Cell wall formation. Synthesis of cross-linked peptidoglycan from the lipid intermediates. The enzyme has a penicillin-insensitive transglycosylase N-terminal domain (formation of linear glycan strands) and a penicillin-sensitive transpeptidase C-terminal domain (cross-linking of the peptide subunits). This chain is Penicillin-binding protein 1A (pbpA), found in Clostridium perfringens (strain ATCC 13124 / DSM 756 / JCM 1290 / NCIMB 6125 / NCTC 8237 / Type A).